A 250-amino-acid chain; its full sequence is Proteasome subunit alpha type-4 (250 aa).

Belongs to the peptidase T1A family. In terms of assembly, the 26S proteasome consists of a 20S proteasome core and two 19S regulatory subunits. The 20S proteasome core is composed of 28 subunits that are arranged in four stacked rings, resulting in a barrel-shaped structure. The two end rings are each formed by seven alpha subunits, and the two central rings are each formed by seven beta subunits. The catalytic chamber with the active sites is on the inside of the barrel.

Its subcellular location is the cytoplasm. The protein localises to the nucleus. The proteasome is a multicatalytic proteinase complex which is characterized by its ability to cleave peptides with Arg, Phe, Tyr, Leu, and Glu adjacent to the leaving group at neutral or slightly basic pH. The proteasome has an ATP-dependent proteolytic activity. The sequence is that of Proteasome subunit alpha type-4 (psmA4) from Dictyostelium discoideum (Social amoeba).